We begin with the raw amino-acid sequence, 469 residues long: Dihydrolipoyl dehydrogenase (469 aa).

FAD contacts are provided by residues 40 to 48, Lys-57, and Ala-120; that span reads EKAVLGGVC. Cys-48 and Cys-53 are oxidised to a cystine. Residues 186–190, Glu-209, and 275–278 contribute to the NAD(+) site; these read GGGAI and AVGV. Residues Asp-317 and Ala-325 each contribute to the FAD site. The active-site Proton acceptor is His-450.

It belongs to the class-I pyridine nucleotide-disulfide oxidoreductase family. In terms of assembly, homodimer. Requires FAD as cofactor.

It is found in the cytoplasm. It catalyses the reaction N(6)-[(R)-dihydrolipoyl]-L-lysyl-[protein] + NAD(+) = N(6)-[(R)-lipoyl]-L-lysyl-[protein] + NADH + H(+). Lipoamide dehydrogenase is a component of the alpha-ketoacid dehydrogenase complexes. The polypeptide is Dihydrolipoyl dehydrogenase (lpd) (Chlorobaculum tepidum (strain ATCC 49652 / DSM 12025 / NBRC 103806 / TLS) (Chlorobium tepidum)).